The primary structure comprises 432 residues: FMRFamide peptide receptor frpr-18 (432 aa).

Residues 1-8 are Extracellular-facing; that stretch reads MESQQLMA. Residues 9–29 form a helical membrane-spanning segment; the sequence is CAILVIVLVGIFGNSLSFILF. Residues 30–42 lie on the Cytoplasmic side of the membrane; the sequence is SRPHMRSSSVNVL. The chain crosses the membrane as a helical span at residues 43 to 63; sequence LCALSFFDFSLLTLSIPIFVI. The Extracellular segment spans residues 64 to 84; it reads PNLDLWANDLSLSTYMAYILK. The chain crosses the membrane as a helical span at residues 85–105; that stretch reads LIYPINLMMQTCSVYIMVMIT. Residues 106–128 lie on the Cytoplasmic side of the membrane; that stretch reads LERWVAVCRPLQVRVWCTPRKSR. A helical transmembrane segment spans residues 129–149; the sequence is NAILVIIVSAFLYNFVRFFEY. At 150 to 176 the chain is on the extracellular side; sequence RFVVTESGALYEKWLRDPGKHRWYYVG. A helical transmembrane segment spans residues 177–197; it reads YYTILYIVTHFLVPFSVMAFA. At 198-225 the chain is on the cytoplasmic side; that stretch reads NGHVIVAMCKLSKTRQMLTRQQQREQST. Residues 226–246 traverse the membrane as a helical segment; the sequence is TVMLLIVTFVFAICNTLPFLL. Topologically, residues 247-271 are extracellular; that stretch reads NVSESIFPTLFQDESTRGLAYWLND. A helical membrane pass occupies residues 272–292; it reads LSNLLVVLNSGTTFIIYFTFS. At 293–432 the chain is on the cytoplasmic side; sequence EKYRQTLVFI…GEPDSPCQPC (140 aa). Disordered stretches follow at residues 328 to 349 and 388 to 411; these read ISSE…SSRS and KLPS…GMPE.

This sequence belongs to the G-protein coupled receptor 1 family. In terms of tissue distribution, expressed in a subset of neurons in the head, midbody, and tail, including AIY, ASI, BAG, URA, CAN, I6, PVQ, DVA, RIM, and VC, and in the anal sphincter and intestinal muscles. Expression from the ASI neurons is involved in promoting arousal.

Its subcellular location is the cell membrane. Its function is as follows. G-protein coupled receptor for flp-2 neuropeptides. May act through the G(q) alpha type of G proteins. Involved in mediating arousal from the sleep-like state called lethargus, which occurs during molting between larval and adult stages, in part by regulating touch sensitivity, and working in concert with neuropeptide pdf-1. This Caenorhabditis elegans protein is FMRFamide peptide receptor frpr-18.